The sequence spans 523 residues: Metalloprotease TIKI2 (523 aa).

The signal sequence occupies residues 1–26 (MGKTMWARAVFLCFSVGTLLWQEVLT). At 27–499 (RRIPVDTGQC…HSQSNSSPKC (473 aa)) the chain is on the extracellular side. N-linked (GlcNAc...) asparagine glycans are attached at residues asparagine 225, asparagine 234, asparagine 283, and asparagine 341. The helical transmembrane segment at 500 to 516 (LSASPAFLYTLVTLCLI) threads the bilayer. Residues 517–523 (TTMRTRS) are Cytoplasmic-facing.

This sequence belongs to the TIKI family. Requires Mn(2+) as cofactor. Co(2+) serves as cofactor.

The protein resides in the cell membrane. In terms of biological role, metalloprotease that acts as a negative regulator of the Wnt signaling pathway by mediating the cleavage of the N-terminal residues of a subset of Wnt proteins. Following cleavage, Wnt proteins become oxidized and form large disulfide-bond oligomers, leading to their inactivation. Able to cleave wnt8. Required for head formation. In Xenopus tropicalis (Western clawed frog), this protein is Metalloprotease TIKI2 (trabd2b).